The following is a 483-amino-acid chain: GTPase Der (483 aa).

EngA-type G domains lie at 3–167 (FTLA…GEER) and 212–387 (LRIA…EIWN). Residues 9 to 16 (GRPNVGKS), 56 to 60 (DTAGL), 119 to 122 (NKAE), 218 to 225 (GRPNAGKS), 265 to 269 (DTAGM), and 330 to 333 (NKWD) each bind GTP. The 85-residue stretch at 388-472 (RRISTGRLNR…PIRLSLRTSD (85 aa)) folds into the KH-like domain.

This sequence belongs to the TRAFAC class TrmE-Era-EngA-EngB-Septin-like GTPase superfamily. EngA (Der) GTPase family. In terms of assembly, associates with the 50S ribosomal subunit.

In terms of biological role, GTPase that plays an essential role in the late steps of ribosome biogenesis. This chain is GTPase Der, found in Brucella suis biovar 1 (strain 1330).